Consider the following 167-residue polypeptide: Leptin (167 aa).

The first 21 residues, 1–21, serve as a signal peptide directing secretion; the sequence is MHCVPLFCFLWFCHHLYYSQA. A disulfide bridge links Cys117 with Cys167.

Belongs to the leptin family.

It is found in the secreted. In terms of biological role, key player in the regulation of energy balance and body weight control. Once released into the circulation, has central and peripheral effects by binding LEPR, found in many tissues, which results in the activation of several major signaling pathways. In the hypothalamus, acts as an appetite-regulating factor that induces a decrease in food intake and an increase in energy consumption by inducing anorexinogenic factors and suppressing orexigenic neuropeptides, also regulates bone mass and secretion of hypothalamo-pituitary-adrenal hormones. In the periphery, increases basal metabolism, influences reproductive function, regulates pancreatic beta-cell function and insulin secretion, is pro-angiogenic for endothelial cell and affects innate and adaptive immunity. In the arcuate nucleus of the hypothalamus, activates by depolarization POMC neurons inducing FOS and SOCS3 expression to release anorexigenic peptides and inhibits by hyperpolarization NPY neurons inducing SOCS3 with a consequent reduction on release of orexigenic peptides. In addition to its known satiety inducing effect, has a modulatory role in nutrient absorption. In the intestine, reduces glucose absorption by enterocytes by activating PKC and leading to a sequential activation of p38, PI3K and ERK signaling pathways which exerts an inhibitory effect on glucose absorption. Acts as a growth factor on certain tissues, through the activation of different signaling pathways increases expression of genes involved in cell cycle regulation such as CCND1, via JAK2-STAT3 pathway, or VEGFA, via MAPK1/3 and PI3K-AKT1 pathways. May also play an apoptotic role via JAK2-STAT3 pathway and up-regulation of BIRC5 expression. Pro-angiogenic, has mitogenic activity on vascular endothelial cells and plays a role in matrix remodeling by regulating the expression of matrix metalloproteinases (MMPs) and tissue inhibitors of metalloproteinases (TIMPs). In innate immunity, modulates the activity and function of neutrophils by increasing chemotaxis and the secretion of oxygen radicals. Increases phagocytosis by macrophages and enhances secretion of pro-inflammatory mediators. Increases cytotoxic ability of NK cells. Plays a pro-inflammatory role, in synergy with IL1B, by inducing NOS2 which promotes the production of IL6, IL8 and Prostaglandin E2, through a signaling pathway that involves JAK2, PI3K, MAP2K1/MEK1 and MAPK14/p38. In adaptive immunity, promotes the switch of memory T-cells towards T helper-1 cell immune responses. Increases CD4(+)CD25(-) T-cell proliferation and reduces autophagy during TCR (T-cell receptor) stimulation, through MTOR signaling pathway activation and BCL2 up-regulation. This Sminthopsis crassicaudata (Fat-tailed dunnart) protein is Leptin (LEP).